A 233-amino-acid polypeptide reads, in one-letter code: Orotidine 5'-phosphate decarboxylase (233 aa).

Residues aspartate 11, lysine 33, 60–69 (DLKFHDIPNT), threonine 120, arginine 181, glutamine 190, glycine 210, and arginine 211 contribute to the substrate site. Lysine 62 acts as the Proton donor in catalysis.

The protein belongs to the OMP decarboxylase family. Type 1 subfamily. As to quaternary structure, homodimer.

The catalysed reaction is orotidine 5'-phosphate + H(+) = UMP + CO2. Its pathway is pyrimidine metabolism; UMP biosynthesis via de novo pathway; UMP from orotate: step 2/2. Functionally, catalyzes the decarboxylation of orotidine 5'-monophosphate (OMP) to uridine 5'-monophosphate (UMP). The protein is Orotidine 5'-phosphate decarboxylase of Vibrio campbellii (strain ATCC BAA-1116).